The chain runs to 1334 residues: SCAR-like protein 2 (1334 aa).

Over residues 197–207 (KTGNFQREKKS) the composition is skewed to basic and acidic residues. Disordered stretches follow at residues 197–281 (KTGN…SSFS), 294–331 (DTKPTVVPHENGHDKLSNNNLHKLSNTPLHTRLNGTSA), 481–516 (PDSSVAEFPDAYQNSSMPPAPESAADFPSLSSADAP), 568–602 (PNQSLPDSKEIPDSKAEDAPIDSPEKLEPGPSSYT), 643–668 (DKPTNEVSATNSSPDDTSSDEDTVES), 791–832 (STSH…KNII), 931–956 (FEKKTENDTNGLPKSSLFSSSHYSEK), 1000–1026 (FQLLPGSSVPQLGSGSESEDDTFGRSY), 1248–1268 (SGQQKLNGHEKSKAVGNDTKN), and 1280–1304 (RSKTFNLRRTNASKTNTSSPTTANS). Over residues 241-256 (VQLTSRHFATPSTDGR) the composition is skewed to polar residues. Residues 310-319 (SNNNLHKLSN) are compositionally biased toward low complexity. Residues 320–330 (TPLHTRLNGTS) show a composition bias toward polar residues. Basic and acidic residues predominate over residues 574–595 (DSKEIPDSKAEDAPIDSPEKLE). Positions 791–823 (STSHSSETNQSTVRTPDTVIGQTEGSTGCSTSF) are enriched in polar residues. The segment covering 945–956 (SSLFSSSHYSEK) has biased composition (low complexity). A compositionally biased stretch (basic and acidic residues) spans 1248-1260 (SGQQKLNGHEKSK). A WH2 domain is found at 1271 to 1289 (EREELLQQIRSKTFNLRRT). Over residues 1289 to 1304 (TNASKTNTSSPTTANS) the composition is skewed to low complexity.

Belongs to the SCAR/WAVE family.

The protein localises to the cytoplasm. It localises to the cytoskeleton. Functionally, involved in regulation of actin and microtubule organization. Part of a WAVE complex that activates the Arp2/3 complex. This is SCAR-like protein 2 from Oryza sativa subsp. japonica (Rice).